We begin with the raw amino-acid sequence, 487 residues long: Cytochrome c-552 (487 aa).

An N-terminal signal peptide occupies residues 1–27 (MSKKWTRNTAAMAAILSALCLSTNALA). Heme c is bound at residue H104. 3 residues coordinate heme: C132, C135, and K136. Residues C170, C173, H174, C219, C222, and H223 each contribute to the heme c site. Ca(2+) is bound by residues E225, Y226, K271, and Q273. Residue Y226 coordinates substrate. Substrate is bound at residue H274. Positions 285, 292, 295, 296, 311, 324, 327, 328, and 403 each coordinate heme c.

Belongs to the cytochrome c-552 family. Ca(2+) serves as cofactor. Heme c is required as a cofactor.

The protein resides in the periplasm. The catalysed reaction is 6 Fe(III)-[cytochrome c] + NH4(+) + 2 H2O = 6 Fe(II)-[cytochrome c] + nitrite + 8 H(+). It participates in nitrogen metabolism; nitrate reduction (assimilation). Catalyzes the reduction of nitrite to ammonia, consuming six electrons in the process. This chain is Cytochrome c-552, found in Photobacterium profundum (strain SS9).